The sequence spans 200 residues: Peptidyl-tRNA hydrolase (200 aa).

TRNA is bound at residue Tyr15. His20 serves as the catalytic Proton acceptor. Residues Tyr66, Asn68, and Asn114 each coordinate tRNA.

It belongs to the PTH family. In terms of assembly, monomer.

The protein resides in the cytoplasm. It catalyses the reaction an N-acyl-L-alpha-aminoacyl-tRNA + H2O = an N-acyl-L-amino acid + a tRNA + H(+). Hydrolyzes ribosome-free peptidyl-tRNAs (with 1 or more amino acids incorporated), which drop off the ribosome during protein synthesis, or as a result of ribosome stalling. Its function is as follows. Catalyzes the release of premature peptidyl moieties from peptidyl-tRNA molecules trapped in stalled 50S ribosomal subunits, and thus maintains levels of free tRNAs and 50S ribosomes. The sequence is that of Peptidyl-tRNA hydrolase from Paraburkholderia phymatum (strain DSM 17167 / CIP 108236 / LMG 21445 / STM815) (Burkholderia phymatum).